Reading from the N-terminus, the 746-residue chain is WD repeat-containing protein 91 (746 aa).

A coiled-coil region spans residues 183 to 215; sequence QRTNQVQEENEVLRQKLFALQAEIHRLKKEEQQ. Serine 256 is subject to Phosphoserine. The span at 265 to 278 shows a compositional bias: low complexity; the sequence is LLPQSKKSPSRLSP. Residues 265 to 336 are disordered; that stretch reads LLPQSKKSPS…QHRQRRLQDH (72 aa). A compositionally biased stretch (polar residues) spans 282 to 299; the sequence is PPQTQSSAKKESFGSQTT. Serine 288 and serine 293 each carry phosphoserine. 7 WD repeats span residues 405–444, 447–487, 514–554, 559–598, 601–640, 663–701, and 708–746; these read EHHSSIMHCRVDCSGRRVASLDVDGVIKVWSFNPIMQTKA, ISKS…NLCE, AASS…QQLQ, PEPIAINCTAFNHNGNLLVTGAADGVIRLFDMQQHECAMS, AHCGEVYSVEFSYDENTVYSIGEDGKFIQWNIHKSGLKVS, VQVPRGRLFAFDSEGNYMLTCSATGGVIYKLGGDDKVLE, and GHRAPVVTVDWSTAMDCGTCLTASMDGKIKLTTLLAHKV.

Belongs to the WD repeat WDR91 family. In terms of assembly, interacts with WDR81; involved in early to late endosome cargo transport. Interacts with BECN1; negatively regulates the PI3 kinase/PI3K activity associated with endosomal membranes.

The protein resides in the early endosome membrane. The protein localises to the late endosome membrane. In terms of biological role, functions as a negative regulator of the PI3 kinase/PI3K activity associated with endosomal membranes via BECN1, a core subunit of the PI3K complex. By modifying the phosphatidylinositol 3-phosphate/PtdInsP3 content of endosomal membranes may regulate endosome fusion, recycling, sorting and early to late endosome transport. It is for instance, required for the delivery of cargos like BST2/tetherin from early to late endosome and thereby participates indirectly to their degradation by the lysosome. May play a role in meiosis. This Bos taurus (Bovine) protein is WD repeat-containing protein 91.